Consider the following 231-residue polypeptide: Potassium/proton antiporter CemA (231 aa).

Helical transmembrane passes span 7–27, 116–136, 156–176, and 191–211; these read FISL…SLSF, IISF…LIFL, ILLL…ELMI, and IISG…KYWI.

It belongs to the CemA family.

Its subcellular location is the plastid. It is found in the chloroplast inner membrane. The enzyme catalyses K(+)(in) + H(+)(out) = K(+)(out) + H(+)(in). Contributes to K(+)/H(+) antiport activity by supporting proton efflux to control proton extrusion and homeostasis in chloroplasts in a light-dependent manner to modulate photosynthesis. Prevents excessive induction of non-photochemical quenching (NPQ) under continuous-light conditions. Indirectly promotes efficient inorganic carbon uptake into chloroplasts. This is Potassium/proton antiporter CemA from Morus indica (Mulberry).